We begin with the raw amino-acid sequence, 246 residues long: Phosphonates import ATP-binding protein PhnC (246 aa).

Positions 2-246 (IKFENVSKIY…ILDEVYRKEA (245 aa)) constitute an ABC transporter domain. Residue 35–42 (GTSGAGKS) participates in ATP binding.

This sequence belongs to the ABC transporter superfamily. Phosphonates importer (TC 3.A.1.9.1) family. The complex is composed of two ATP-binding proteins (PhnC), two transmembrane proteins (PhnE) and a solute-binding protein (PhnD).

It localises to the cell membrane. It catalyses the reaction phosphonate(out) + ATP + H2O = phosphonate(in) + ADP + phosphate + H(+). Its function is as follows. Part of the ABC transporter complex PhnCDE involved in phosphonates import. Responsible for energy coupling to the transport system. In Lactococcus lactis subsp. lactis (strain IL1403) (Streptococcus lactis), this protein is Phosphonates import ATP-binding protein PhnC.